The chain runs to 114 residues: Holo-[acyl-carrier-protein] synthase (114 aa).

Mg(2+) contacts are provided by D5 and E50.

This sequence belongs to the P-Pant transferase superfamily. AcpS family. Mg(2+) is required as a cofactor.

It localises to the cytoplasm. It catalyses the reaction apo-[ACP] + CoA = holo-[ACP] + adenosine 3',5'-bisphosphate + H(+). In terms of biological role, transfers the 4'-phosphopantetheine moiety from coenzyme A to a Ser of acyl-carrier-protein. In Campylobacter curvus (strain 525.92), this protein is Holo-[acyl-carrier-protein] synthase.